The following is a 156-amino-acid chain: Ribonuclease pancreatic (156 aa).

Positions 1–28 (MALEKSLVLLPLLVLILLVLGWVQPSLG) are cleaved as a signal peptide. A compositionally biased stretch (basic and acidic residues) spans 33-43 (AKKFQRQHMDS). The disordered stretch occupies residues 33 to 52 (AKKFQRQHMDSDSSPSSNST). Substrate-binding residues include Lys-35 and Arg-38. His-40 functions as the Proton acceptor in the catalytic mechanism. N-linked (GlcNAc...) asparagine glycans are attached at residues Asn-50 and Asn-62. 4 cysteine pairs are disulfide-bonded: Cys-54-Cys-112, Cys-68-Cys-123, Cys-86-Cys-138, and Cys-93-Cys-100. Residues 69–73 (KPVNT) and Lys-94 contribute to the substrate site. Asn-104 carries an N-linked (GlcNAc...) asparagine glycan. Residue Arg-113 coordinates substrate. N-linked (GlcNAc...) asparagine glycosylation occurs at Asn-116. Residue His-147 is the Proton donor of the active site.

The protein belongs to the pancreatic ribonuclease family. As to quaternary structure, monomer. Interacts with and forms tight 1:1 complexes with RNH1. Dimerization of two such complexes may occur. Interaction with RNH1 inhibits this protein.

The protein localises to the secreted. It catalyses the reaction an [RNA] containing cytidine + H2O = an [RNA]-3'-cytidine-3'-phosphate + a 5'-hydroxy-ribonucleotide-3'-[RNA].. It carries out the reaction an [RNA] containing uridine + H2O = an [RNA]-3'-uridine-3'-phosphate + a 5'-hydroxy-ribonucleotide-3'-[RNA].. In terms of biological role, endonuclease that catalyzes the cleavage of RNA on the 3' side of pyrimidine nucleotides. Acts on single-stranded and double-stranded RNA. This is Ribonuclease pancreatic (RNASE1) from Gorilla gorilla gorilla (Western lowland gorilla).